The sequence spans 638 residues: 1-deoxy-D-xylulose-5-phosphate synthase (638 aa).

Thiamine diphosphate contacts are provided by residues histidine 77 and 118–120; that span reads AHA. Aspartate 149 provides a ligand contact to Mg(2+). Residues 150 to 151, asparagine 178, tyrosine 287, and glutamate 369 each bind thiamine diphosphate; that span reads GS. Asparagine 178 is a Mg(2+) binding site.

The protein belongs to the transketolase family. DXPS subfamily. Homodimer. Requires Mg(2+) as cofactor. Thiamine diphosphate is required as a cofactor.

It catalyses the reaction D-glyceraldehyde 3-phosphate + pyruvate + H(+) = 1-deoxy-D-xylulose 5-phosphate + CO2. It functions in the pathway metabolic intermediate biosynthesis; 1-deoxy-D-xylulose 5-phosphate biosynthesis; 1-deoxy-D-xylulose 5-phosphate from D-glyceraldehyde 3-phosphate and pyruvate: step 1/1. Functionally, catalyzes the acyloin condensation reaction between C atoms 2 and 3 of pyruvate and glyceraldehyde 3-phosphate to yield 1-deoxy-D-xylulose-5-phosphate (DXP). This is 1-deoxy-D-xylulose-5-phosphate synthase from Phenylobacterium zucineum (strain HLK1).